The sequence spans 430 residues: Ribosomal protein uS12 methylthiotransferase RimO (430 aa).

In terms of domain architecture, MTTase N-terminal spans 2-119 (ISVYSISLGC…WPEMIGRALG (118 aa)). [4Fe-4S] cluster is bound by residues cysteine 11, cysteine 46, cysteine 81, cysteine 145, cysteine 149, and cysteine 152. The Radical SAM core domain maps to 131 to 361 (STGPSYAYLK…MEVQAEISEE (231 aa)). In terms of domain architecture, TRAM spans 364–430 (EGFTGSDEDV…SRTYDLVALS (67 aa)).

This sequence belongs to the methylthiotransferase family. RimO subfamily. Requires [4Fe-4S] cluster as cofactor.

It is found in the cytoplasm. The catalysed reaction is L-aspartate(89)-[ribosomal protein uS12]-hydrogen + (sulfur carrier)-SH + AH2 + 2 S-adenosyl-L-methionine = 3-methylsulfanyl-L-aspartate(89)-[ribosomal protein uS12]-hydrogen + (sulfur carrier)-H + 5'-deoxyadenosine + L-methionine + A + S-adenosyl-L-homocysteine + 2 H(+). Catalyzes the methylthiolation of an aspartic acid residue of ribosomal protein uS12. This is Ribosomal protein uS12 methylthiotransferase RimO from Oleidesulfovibrio alaskensis (strain ATCC BAA-1058 / DSM 17464 / G20) (Desulfovibrio alaskensis).